Here is a 993-residue protein sequence, read N- to C-terminus: Desmoglein-3 (993 aa).

An N-terminal signal peptide occupies residues 1–23; that stretch reads MTWLLFRTSGALAILMVLILVHG. The propeptide occupies 24–48; the sequence is ELRIETKGQHGEDETAIQGRRRYKR. 4 Cadherin domains span residues 48–156, 157–266, 267–386, and 383–494; these read REWV…APVF, SQSI…FPMF, KESQ…HPAS, and HPAS…CPTV. The Extracellular segment spans residues 49–617; that stretch reads EWVKFAKPCR…GKRPSGRLGS (569 aa). Asn109 and Asn179 each carry an N-linked (GlcNAc...) asparagine glycan. N-linked (GlcNAc...) asparagine glycosylation is found at Asn458 and Asn544. Residues 618-638 form a helical membrane-spanning segment; the sequence is AAIGLLLLGLLLLLLAPLLLL. Residues 639 to 993 lie on the Cytoplasmic side of the membrane; the sequence is TCDYGVGPIG…CTEDPCSRLI (355 aa). Residues 641 to 713 form a required for interaction with CTNND1 and localization at cell-cell junctions region; it reads DYGVGPIGGV…NTYAGGTVVE (73 aa). Desmoglein repeat repeat units lie at residues 903–929 and 930–960; these read LSASSSVLQSATSIPNPVQHGSYMVTE and TYSASGSLVQPTTTVLEPLLTQNVTVTERVI.

In terms of assembly, homodimer. Part of a complex that contains DSG3, PKP1, YAP1 and YWHAG; the complex is required for localization of DSG3 and YAP1 to the cell membrane in keratinocytes. Interacts with PKP2. Interacts with CTNND1; the interaction facilitates DSG3 localization and retention at cell-cell junctions. Interacts with CDH1; the interaction is required for CDH1 localization to developing adherens junctions. Interacts with RAC1; the interaction is required for DSG3 translocation to cell-cell junctions, organization of cortical F-actin bundles and actin anchoring at cell-cell junctions. Interacts with DSC3; the interaction may limit the interaction of DSC3 with p38MAPK family members and therefore repress p38MAPK signaling activation.

It localises to the cell membrane. It is found in the cell junction. The protein localises to the desmosome. Its subcellular location is the cytoplasm. The protein resides in the tight junction. Functionally, a component of desmosome cell-cell junctions which are required for positive regulation of cellular adhesion. Required for adherens and desmosome junction assembly in response to mechanical force in keratinocytes. Required for desmosome-mediated cell-cell adhesion of cells surrounding the telogen hair club and the basal layer of the outer root sheath epithelium, consequently is essential for the anchoring of telogen hairs in the hair follicle. Required for the maintenance of the epithelial barrier via promoting desmosome-mediated intercellular attachment of suprabasal epithelium to basal cells. May play a role in the protein stability of the desmosome plaque components DSP, JUP, PKP1, PKP2 and PKP3. Required for YAP1 localization at the plasma membrane in keratinocytes in response to mechanical strain, via the formation of an interaction complex composed of DSG3, PKP1 and YWHAG. May also be involved in the positive regulation of YAP1 target gene transcription and as a result cell proliferation. Positively regulates cellular contractility and cell junction formation via organization of cortical F-actin bundles and anchoring of actin to tight junctions, in conjunction with RAC1. The cytoplasmic pool of DSG3 is required for the localization of CDH1 and CTNNB1 at developing adherens junctions, potentially via modulation of SRC activity. Inhibits keratinocyte migration via suppression of p38MAPK signaling, may therefore play a role in moderating wound healing. In Canis lupus familiaris (Dog), this protein is Desmoglein-3 (DSG3).